The following is a 1378-amino-acid chain: DNA-directed RNA polymerase subunit beta (1378 aa).

Belongs to the RNA polymerase beta chain family. The RNAP catalytic core consists of 2 alpha, 1 beta, 1 beta' and 1 omega subunit. When a sigma factor is associated with the core the holoenzyme is formed, which can initiate transcription.

The enzyme catalyses RNA(n) + a ribonucleoside 5'-triphosphate = RNA(n+1) + diphosphate. DNA-dependent RNA polymerase catalyzes the transcription of DNA into RNA using the four ribonucleoside triphosphates as substrates. In Campylobacter jejuni (strain RM1221), this protein is DNA-directed RNA polymerase subunit beta.